The chain runs to 305 residues: N-acetylglucosamine-1-phosphotransferase subunit gamma (305 aa).

An N-terminal signal peptide occupies residues 1 to 24; it reads MAAGLARLLLLLGLSAGGPAPAGA. One can recognise an MRH domain in the interval 69–171; it reads GKCFSLVEST…TFETPLVCHP (103 aa). Cysteines 71 and 84 form a disulfide. Residues N88 and N115 are each glycosylated (N-linked (GlcNAc...) asparagine). 2 disulfide bridges follow: C129–C157 and C142–C169. A DMAP1-binding domain is found at 176–279; that stretch reads VYPTLPEALQ…YTRPTETSNL (104 aa). The interval 267-305 is disordered; that stretch reads GIPYTRPTETSNLEHLGHETPRAKSPEQLRGDPGLRGSL. Positions 281-296 are enriched in basic and acidic residues; sequence HLGHETPRAKSPEQLR.

Homodimer; disulfide-linked. Hexamer of two alpha (GNPTAB), two beta (GNPTAB) and two gamma (GNPTG) subunits; disulfide-linked. The alpha and/or the beta subunits of the enzyme constitute the catalytic subunits. In terms of processing, cys-245 mediates the formation of the interchain disulfide bond for formation of the homodimer. Cys-142, Cys-157 and Cys-169 are involved in intramolecular disulfide bonds formation. Widely expressed.

It localises to the secreted. The protein resides in the golgi apparatus. In terms of biological role, non-catalytic subunit of the N-acetylglucosamine-1-phosphotransferase complex, an enzyme that catalyzes the formation of mannose 6-phosphate (M6P) markers on high mannose type oligosaccharides in the Golgi apparatus. Binds and presents the high mannose glycans of the acceptor to the catalytic alpha and beta subunits (GNPTAB). Enhances the rate of N-acetylglucosamine-1-phosphate transfer to the oligosaccharides of acid hydrolase acceptors. This chain is N-acetylglucosamine-1-phosphotransferase subunit gamma (GNPTG), found in Homo sapiens (Human).